Here is a 247-residue protein sequence, read N- to C-terminus: UPF0246 protein LSL_1719 (247 aa).

This sequence belongs to the UPF0246 family.

The sequence is that of UPF0246 protein LSL_1719 from Ligilactobacillus salivarius (strain UCC118) (Lactobacillus salivarius).